The primary structure comprises 159 residues: Putative phosphatidylinositol-3-phosphatase (159 aa).

Positions M1 to G16 are cleaved as a signal peptide. Helical transmembrane passes span L30–W50, A54–W74, W104–V124, and V134–A154.

It is found in the membrane. The catalysed reaction is a 1,2-diacyl-sn-glycero-3-phospho-(1D-myo-inositol-3-phosphate) + H2O = a 1,2-diacyl-sn-glycero-3-phospho-(1D-myo-inositol) + phosphate. Its function is as follows. May be responsible for the conversion of phosphatidylinositol phosphate diacylglycerol (PIP-DAG) to phosphatidylinositol diacylglycerol (PI-DAG), making it a key enzyme in the inositol glycerophospholipid biosynthesis pathway. The protein is Putative phosphatidylinositol-3-phosphatase of Bacteroides thetaiotaomicron (strain ATCC 29148 / DSM 2079 / JCM 5827 / CCUG 10774 / NCTC 10582 / VPI-5482 / E50).